We begin with the raw amino-acid sequence, 228 residues long: Phosphatidylserine decarboxylase proenzyme (228 aa).

The active-site Schiff-base intermediate with substrate; via pyruvic acid is the Ser197. Ser197 is modified (pyruvic acid (Ser); by autocatalysis).

It belongs to the phosphatidylserine decarboxylase family. PSD-A subfamily. In terms of assembly, heterodimer of a large membrane-associated beta subunit and a small pyruvoyl-containing alpha subunit. Pyruvate is required as a cofactor. Post-translationally, is synthesized initially as an inactive proenzyme. Formation of the active enzyme involves a self-maturation process in which the active site pyruvoyl group is generated from an internal serine residue via an autocatalytic post-translational modification. Two non-identical subunits are generated from the proenzyme in this reaction, and the pyruvate is formed at the N-terminus of the alpha chain, which is derived from the carboxyl end of the proenzyme. The post-translation cleavage follows an unusual pathway, termed non-hydrolytic serinolysis, in which the side chain hydroxyl group of the serine supplies its oxygen atom to form the C-terminus of the beta chain, while the remainder of the serine residue undergoes an oxidative deamination to produce ammonia and the pyruvoyl prosthetic group on the alpha chain.

It is found in the cell membrane. It catalyses the reaction a 1,2-diacyl-sn-glycero-3-phospho-L-serine + H(+) = a 1,2-diacyl-sn-glycero-3-phosphoethanolamine + CO2. It functions in the pathway phospholipid metabolism; phosphatidylethanolamine biosynthesis; phosphatidylethanolamine from CDP-diacylglycerol: step 2/2. In terms of biological role, catalyzes the formation of phosphatidylethanolamine (PtdEtn) from phosphatidylserine (PtdSer). The protein is Phosphatidylserine decarboxylase proenzyme of Phocaeicola vulgatus (strain ATCC 8482 / DSM 1447 / JCM 5826 / CCUG 4940 / NBRC 14291 / NCTC 11154) (Bacteroides vulgatus).